We begin with the raw amino-acid sequence, 394 residues long: Chaperone protein DnaJ (394 aa).

Residues 6 to 71 (DYYEVLEVTK…DKRARYDQFG (66 aa)) enclose the J domain. The CR-type zinc-finger motif lies at 152-234 (GVEKKFKLKK…CGGEGIEYGE (83 aa)). The Zn(2+) site is built by Cys165, Cys168, Cys182, Cys185, Cys208, Cys211, Cys222, and Cys225. CXXCXGXG motif repeat units follow at residues 165 to 172 (CSHCHGTG), 182 to 189 (CPTCKGSG), 208 to 215 (CPTCNGEG), and 222 to 229 (CKVCGGEG).

Belongs to the DnaJ family. Homodimer. Zn(2+) is required as a cofactor.

It localises to the cytoplasm. In terms of biological role, participates actively in the response to hyperosmotic and heat shock by preventing the aggregation of stress-denatured proteins and by disaggregating proteins, also in an autonomous, DnaK-independent fashion. Unfolded proteins bind initially to DnaJ; upon interaction with the DnaJ-bound protein, DnaK hydrolyzes its bound ATP, resulting in the formation of a stable complex. GrpE releases ADP from DnaK; ATP binding to DnaK triggers the release of the substrate protein, thus completing the reaction cycle. Several rounds of ATP-dependent interactions between DnaJ, DnaK and GrpE are required for fully efficient folding. Also involved, together with DnaK and GrpE, in the DNA replication of plasmids through activation of initiation proteins. The protein is Chaperone protein DnaJ of Bacteroides fragilis (strain YCH46).